The following is a 176-amino-acid chain: Ribosome rescue factor SmrB (176 aa).

The Smr domain occupies 93 to 168 (LDLHGYRQSE…GDAALLVLID (76 aa)).

This sequence belongs to the SmrB family. In terms of assembly, associates with collided ribosomes, but not with correctly translating polysomes.

Acts as a ribosome collision sensor. Detects stalled/collided disomes (pairs of ribosomes where the leading ribosome is stalled and a second ribosome has collided with it) and endonucleolytically cleaves mRNA at the 5' boundary of the stalled ribosome. Stalled/collided disomes form a new interface (primarily via the 30S subunits) that binds SmrB. Cleaved mRNA becomes available for tmRNA ligation, leading to ribosomal subunit dissociation and rescue of stalled ribosomes. The polypeptide is Ribosome rescue factor SmrB (Shewanella baltica (strain OS223)).